A 357-amino-acid polypeptide reads, in one-letter code: Phenylalanine--tRNA ligase alpha subunit (357 aa).

Glu-257 contacts Mg(2+).

Belongs to the class-II aminoacyl-tRNA synthetase family. Phe-tRNA synthetase alpha subunit type 1 subfamily. As to quaternary structure, tetramer of two alpha and two beta subunits. Requires Mg(2+) as cofactor.

The protein localises to the cytoplasm. The catalysed reaction is tRNA(Phe) + L-phenylalanine + ATP = L-phenylalanyl-tRNA(Phe) + AMP + diphosphate + H(+). In Ruegeria pomeroyi (strain ATCC 700808 / DSM 15171 / DSS-3) (Silicibacter pomeroyi), this protein is Phenylalanine--tRNA ligase alpha subunit.